A 601-amino-acid chain; its full sequence is Trehalose synthase/amylase TreS (601 aa).

Positions 1–21 (MNEAEHSVEHPPVQGSHVEGG) are disordered. Residue D98 coordinates substrate. Position 140 (N140) interacts with Ca(2+). Positions 141 and 206 each coordinate substrate. D208 serves as a coordination point for Ca(2+). Position 236 (R236) interacts with substrate. Catalysis depends on D238, which acts as the Nucleophile. Residues Y242, L243, and E245 each coordinate Ca(2+). The active-site Proton donor is E280. The substrate site is built by H349 and D350.

Belongs to the glycosyl hydrolase 13 family. TreS subfamily. As to quaternary structure, homohexamer.

It carries out the reaction D-maltose = alpha,alpha-trehalose. It catalyses the reaction Endohydrolysis of (1-&gt;4)-alpha-D-glucosidic linkages in polysaccharides containing three or more (1-&gt;4)-alpha-linked D-glucose units.. The protein operates within glycan biosynthesis; glycogen biosynthesis. It functions in the pathway capsule biogenesis; capsule polysaccharide biosynthesis. Functionally, catalyzes the reversible interconversion of maltose and trehalose by transglucosylation. Also displays amylase activity, catalyzing the endohydrolysis of (1-&gt;4)-alpha-D-glucosidic linkages in glycogen and maltooligosaccharides such as maltoheptaose, to produce maltose which then can be converted to trehalose. TreS plays a key role in the utilization of trehalose for the production of glycogen and alpha-glucan via the TreS-Pep2 branch involved in the biosynthesis of maltose-1-phosphate (M1P). Might also function as a sensor and/or regulator of trehalose levels within the cell. Thus, when trehalose levels in the cell become dangerously low, TreS could expedite the conversion of glycogen to maltose via its amylase activity and then convert the maltose to trehalose; but this enzyme also could expedite or promote the conversion of trehalose to glycogen when cytoplasmic trehalose levels become too high. In Mycobacterium tuberculosis (strain CDC 1551 / Oshkosh), this protein is Trehalose synthase/amylase TreS.